Here is a 274-residue protein sequence, read N- to C-terminus: Thiamine kinase (274 aa).

This sequence belongs to the thiamine kinase family.

It carries out the reaction thiamine + ATP = thiamine phosphate + ADP + H(+). The protein operates within cofactor biosynthesis; thiamine diphosphate biosynthesis; thiamine phosphate from thiamine: step 1/1. Its function is as follows. Catalyzes the ATP-dependent phosphorylation of thiamine to thiamine phosphate. Is involved in thiamine salvage. This Salmonella heidelberg (strain SL476) protein is Thiamine kinase.